The primary structure comprises 376 residues: 4-hydroxy-3-methylbut-2-en-1-yl diphosphate synthase (flavodoxin) (376 aa).

Cysteine 272, cysteine 275, cysteine 307, and glutamate 314 together coordinate [4Fe-4S] cluster.

Belongs to the IspG family. [4Fe-4S] cluster serves as cofactor.

It carries out the reaction (2E)-4-hydroxy-3-methylbut-2-enyl diphosphate + oxidized [flavodoxin] + H2O + 2 H(+) = 2-C-methyl-D-erythritol 2,4-cyclic diphosphate + reduced [flavodoxin]. It functions in the pathway isoprenoid biosynthesis; isopentenyl diphosphate biosynthesis via DXP pathway; isopentenyl diphosphate from 1-deoxy-D-xylulose 5-phosphate: step 5/6. Its function is as follows. Converts 2C-methyl-D-erythritol 2,4-cyclodiphosphate (ME-2,4cPP) into 1-hydroxy-2-methyl-2-(E)-butenyl 4-diphosphate. The chain is 4-hydroxy-3-methylbut-2-en-1-yl diphosphate synthase (flavodoxin) from Blochmanniella pennsylvanica (strain BPEN).